The sequence spans 381 residues: MRCLVVLLAVFALSQGAEITRIPLYKGKSLRKALKEHGLLEDFLQKQQYGISSKYSGFGEVASVPLTNYLDSQYFGKIYLGTPPQEFTVLFDTGSSDFWVPSIYCKSNACKNHQRFDPRKSSTFQNLGKPLSIHYGTGSMQGILGYDTVTVSNIVDIQQTVGLSTQEPGDVFTYAEFDGILGMAYPSLASEYSIPVFDNMMNRHLVAQDLFSVYMDRNGQESMLTLGAIDPSYYTGSLHWVPVTVQQYWQFTVDSVTISGVVVACEGGCQAILDTGTSKLVGPSSDILNIQQAIGATQNQYGEFDIDCDNLSYMPTVVFEINGKMYPLTPSAYTSQDQGFCTSGFQSENHSQKWILGDVFIREYYSVFDRANNLVGLAKAI.

Residues 1-16 (MRCLVVLLAVFALSQG) form the signal peptide. Positions 17-58 (AEITRIPLYKGKSLRKALKEHGLLEDFLQKQQYGISSKYSGF) are cleaved as a propeptide — activation peptide. Residues 74–378 (YFGKIYLGTP…DRANNLVGLA (305 aa)) enclose the Peptidase A1 domain. Asp-92 is an active-site residue. 2 cysteine pairs are disulfide-bonded: Cys-105/Cys-110 and Cys-265/Cys-269. Residue Asp-274 is part of the active site. An intrachain disulfide couples Cys-308 to Cys-341.

The protein belongs to the peptidase A1 family. Monomer.

It carries out the reaction Broad specificity similar to that of pepsin A. Clots milk by cleavage of a single 104-Ser-Phe-|-Met-Ala-107 bond in kappa-chain of casein.. Chymosin is synthesized in the mucosa of the abomasum (fourth stomach) of young (unweaned) ruminants. The enzyme hydrolyzes casein to paracasein. This is Chymosin (CYM) from Bos taurus (Bovine).